The sequence spans 424 residues: Piriformospora indica-insensitive protein 2 (424 aa).

The signal sequence occupies residues 1 to 21 (MLWQTFFSSLLLLSLLFGCNG). 10 LRR repeats span residues 141 to 166 (ASNLESLEFRSNPGLIGELPETIGNL), 167 to 190 (TKLKSLVVLENGFSGELPASICNL), 191 to 213 (KRLKRLVFAGNSFAGMIPNCFKG), 214 to 237 (LKELLILDLSRNSFSGTLPTSFGD), 238 to 263 (LVSLLKLDLSNNLLEGNLPQELGFLK), 265 to 286 (LTLLDLRNNRFSGGLSKNIENI), 287 to 311 (QSLTELVLSNNPMGEEDMVGTNWGK), 312 to 336 (MSNLVVLDLSKMGLRGEIPTSLTNL), 337 to 360 (KRLRFLGLNNNNLTGFVPSKKLEA), and 362 to 387 (PCLGALYINGNNLTGELRFSTKFYEK).

The protein localises to the cell membrane. In terms of biological role, required for growth promotion and enhanced seed production mediated by the endophytic fungus Piriformospora indica. The chain is Piriformospora indica-insensitive protein 2 (PII-2) from Arabidopsis thaliana (Mouse-ear cress).